We begin with the raw amino-acid sequence, 148 residues long: Large ribosomal subunit protein bL9 (148 aa).

Belongs to the bacterial ribosomal protein bL9 family.

Its function is as follows. Binds to the 23S rRNA. The chain is Large ribosomal subunit protein bL9 from Pseudomonas fluorescens (strain SBW25).